A 372-amino-acid chain; its full sequence is MAEKLHISVLCGGQSTEHEISIQSAKNIVNTLDAAKYLISVIFIDHVGRWYLIDQPEMFLAHSPDHLVKEGSARPITIAFGDAAKPWQSLNGDGRRYSADCVFPMVHGTQGEDGALQGLLELLNLPYVGANVQSSAVCMEKDLTKTVLRAGGIPVVDWHTLSPRDATEGVYQRLLDRWGTSELFVKAVSLGSSVATLPVKTETEFTKAVKEVFRYDDRLMVEPRIRGREIECAVLGNGAPKASLPGEIIPHHDYYSYDAKYLDPNGATTTTSVDLSESVTKQIQQIAIDAFKMVHCSGMARVDFFVTPNNKVLVNEINTIPGFTNISMYPKMWEASGLPCPNLLDQLIELAIDRHQEQQKLIRCYEVKARSL.

The 205-residue stretch at 145–349 folds into the ATP-grasp domain; the sequence is KTVLRAGGIP…CPNLLDQLIE (205 aa). 176-231 contacts ATP; sequence DRWGTSELFVKAVSLGSSVATLPVKTETEFTKAVKEVFRYDDRLMVEPRIRGREIE. Mg(2+)-binding residues include Asp303, Glu316, and Asn318.

This sequence belongs to the D-alanine--D-alanine ligase family. It depends on Mg(2+) as a cofactor. Mn(2+) is required as a cofactor.

The protein resides in the cytoplasm. It carries out the reaction 2 D-alanine + ATP = D-alanyl-D-alanine + ADP + phosphate + H(+). The protein operates within cell wall biogenesis; peptidoglycan biosynthesis. Functionally, cell wall formation. The sequence is that of D-alanine--D-alanine ligase from Coxiella burnetii (strain Dugway 5J108-111).